A 74-amino-acid chain; its full sequence is Conotoxin AbVIA (74 aa).

The first 17 residues, valine 1 to alanine 17, serve as a signal peptide directing secretion. Positions valine 18 to lysine 38 are excised as a propeptide. Intrachain disulfides connect cysteine 43-cysteine 57, cysteine 50-cysteine 61, and cysteine 56-cysteine 68. Serine 73 carries the post-translational modification Serine amide.

It belongs to the conotoxin O1 superfamily. Expressed by the venom duct.

The protein resides in the secreted. The polypeptide is Conotoxin AbVIA (Conus abbreviatus (Abbreviated cone)).